A 334-amino-acid chain; its full sequence is Putative binding protein YtlA (334 aa).

Residues 1 to 23 (MNRWLRLGFACVGSIFLMFALAA) form the signal peptide. A lipid anchor (N-palmitoyl cysteine) is attached at cysteine 24. A lipid anchor (S-diacylglycerol cysteine) is attached at cysteine 24.

It belongs to the bacterial solute-binding protein SsuA/TauA family.

The protein localises to the cell membrane. The protein is Putative binding protein YtlA (ytlA) of Bacillus subtilis (strain 168).